Here is a 451-residue protein sequence, read N- to C-terminus: GABA transporter 1 (451 aa).

11 helical membrane-spanning segments follow: residues 35–55, 57–77, 115–135, 153–173, 182–202, 222–242, 262–282, 308–328, 356–376, 382–402, and 411–431; these read CGFHLTTSIVAPALLSLPYAF, FLGWAAGISCLVGGAAVTFYS, VGPIQMAVCYGVVIANALLGG, LFEFVIIFGCLLLVLAQFPSF, LSLLLCLLYSASAAAASIYIG, VFGIFNAMAIIATTYGNGIIP, MCYLVVIMTFFTVAITGYWAF, FIFLVNLFTVLQLSAVAVVYL, LVVRSLFVVMATIVAAMLPFF, LLGAFGFIPLDFVLPVVFFNF, and FIFWINTVIAVVFSCLGVIAM.

The protein belongs to the amino acid/polyamine transporter 2 family. Amino acid/auxin permease (AAAP) (TC 2.A.18.2) subfamily. In terms of tissue distribution, highly expressed in flowers and at lower levels in roots, leaves and stems.

It localises to the cell membrane. Functionally, high affinity gamma-aminobutyric acid (GABA) transporter probably involved in GABA uptake into cells. When expressed in a heterologous system (Xenopus oocytes), imports GABA, butylamine, beta- and L-Alanine, 5-aminovaleric acid, 6-aminocaproic acid and 8-aminocaprylic acid, but does not mediate the transport of proline or glycine betaine. The polypeptide is GABA transporter 1 (GAT1) (Arabidopsis thaliana (Mouse-ear cress)).